The sequence spans 382 residues: Bifunctional enzyme IspD/IspF (382 aa).

Residues Met-1 to Thr-225 are 2-C-methyl-D-erythritol 4-phosphate cytidylyltransferase. A 2-C-methyl-D-erythritol 2,4-cyclodiphosphate synthase region spans residues Arg-226–Ala-382. Asp-232 and His-234 together coordinate a divalent metal cation. Residues Asp-232–His-234 and His-258–Ser-259 each bind 4-CDP-2-C-methyl-D-erythritol 2-phosphate. His-266 is an a divalent metal cation binding site. 4-CDP-2-C-methyl-D-erythritol 2-phosphate is bound by residues Asp-280–Gly-282, Thr-356–Glu-359, Phe-363, and Arg-366.

This sequence in the N-terminal section; belongs to the IspD/TarI cytidylyltransferase family. IspD subfamily. In the C-terminal section; belongs to the IspF family. A divalent metal cation is required as a cofactor.

The catalysed reaction is 2-C-methyl-D-erythritol 4-phosphate + CTP + H(+) = 4-CDP-2-C-methyl-D-erythritol + diphosphate. It carries out the reaction 4-CDP-2-C-methyl-D-erythritol 2-phosphate = 2-C-methyl-D-erythritol 2,4-cyclic diphosphate + CMP. The protein operates within isoprenoid biosynthesis; isopentenyl diphosphate biosynthesis via DXP pathway; isopentenyl diphosphate from 1-deoxy-D-xylulose 5-phosphate: step 2/6. Its pathway is isoprenoid biosynthesis; isopentenyl diphosphate biosynthesis via DXP pathway; isopentenyl diphosphate from 1-deoxy-D-xylulose 5-phosphate: step 4/6. Functionally, bifunctional enzyme that catalyzes the formation of 4-diphosphocytidyl-2-C-methyl-D-erythritol from CTP and 2-C-methyl-D-erythritol 4-phosphate (MEP) (IspD), and catalyzes the conversion of 4-diphosphocytidyl-2-C-methyl-D-erythritol 2-phosphate (CDP-ME2P) to 2-C-methyl-D-erythritol 2,4-cyclodiphosphate (ME-CPP) with a corresponding release of cytidine 5-monophosphate (CMP) (IspF). The sequence is that of Bifunctional enzyme IspD/IspF from Caulobacter vibrioides (strain ATCC 19089 / CIP 103742 / CB 15) (Caulobacter crescentus).